The chain runs to 348 residues: UDP-3-O-acylglucosamine N-acyltransferase (348 aa).

The Proton acceptor role is filled by His-241.

Belongs to the transferase hexapeptide repeat family. LpxD subfamily. As to quaternary structure, homotrimer.

It carries out the reaction a UDP-3-O-[(3R)-3-hydroxyacyl]-alpha-D-glucosamine + a (3R)-hydroxyacyl-[ACP] = a UDP-2-N,3-O-bis[(3R)-3-hydroxyacyl]-alpha-D-glucosamine + holo-[ACP] + H(+). It functions in the pathway bacterial outer membrane biogenesis; LPS lipid A biosynthesis. Its function is as follows. Catalyzes the N-acylation of UDP-3-O-acylglucosamine using 3-hydroxyacyl-ACP as the acyl donor. Is involved in the biosynthesis of lipid A, a phosphorylated glycolipid that anchors the lipopolysaccharide to the outer membrane of the cell. In Neisseria meningitidis serogroup B (strain ATCC BAA-335 / MC58), this protein is UDP-3-O-acylglucosamine N-acyltransferase.